A 126-amino-acid polypeptide reads, in one-letter code: Holo-[acyl-carrier-protein] synthase (126 aa).

Mg(2+) is bound by residues Asp9 and Glu58.

The protein belongs to the P-Pant transferase superfamily. AcpS family. Mg(2+) serves as cofactor.

It is found in the cytoplasm. It catalyses the reaction apo-[ACP] + CoA = holo-[ACP] + adenosine 3',5'-bisphosphate + H(+). In terms of biological role, transfers the 4'-phosphopantetheine moiety from coenzyme A to a Ser of acyl-carrier-protein. The sequence is that of Holo-[acyl-carrier-protein] synthase from Aliivibrio fischeri (strain MJ11) (Vibrio fischeri).